A 461-amino-acid polypeptide reads, in one-letter code: MGSFTKEEFDCHILDEGFTAKDILDQKINEVSSSDDKDAFYVADLGDVLKKHLRWLKALPRVTPFYAVKCNDSRAIVSTLAAIGTGFDCASKTEIQLVQGLGVPPERIIYANPCKQVSQIKYAASNGVQMMTFDSEIELMKVARAHPKAKLVLRIATDDSKAVCRLSVKFGATLKTSRLLLERAKELNIDVIGVSFHVGSGCTDPETFVQAVSDARCVFDMGTEVGFSMYLLDIGGGFPGSEDTKLKFEEITSVINPALDKYFPSDSGVRIIAEPGRYYVASAFTLAVNIIAKKTVWKEQTGSDDEDESNEQTLMYYVNDGVYGSFNCILYDHAHVKALLQKRPKPDEKYYSSSIWGPTCDGLDRIVERCSLPEMHVGDWMLFENMGAYTVAAASTFNGFQRPNIYYVMSRSMWQLMKQIQSHGFPPEVEEQDVGTLPMSCAQESGMDRHPAACASASINV.

Position 69 is an N6-(pyridoxal phosphate)lysine (K69). Pyridoxal 5'-phosphate is bound by residues S200, G237, and E274–R277. The residue at position 303 (S303) is a Phosphoserine; by CK2. Y331–D332 is a substrate binding site. Residue C360 is the Proton donor; shared with dimeric partner of the active site. An S-nitrosocysteine modification is found at C360. D361 serves as a coordination point for substrate. Y389 contributes to the pyridoxal 5'-phosphate binding site.

Belongs to the Orn/Lys/Arg decarboxylase class-II family. In terms of assembly, homodimer. Only the dimer is catalytically active, as the active sites are constructed of residues from both monomers. Requires pyridoxal 5'-phosphate as cofactor.

The enzyme catalyses L-ornithine + H(+) = putrescine + CO2. It functions in the pathway amine and polyamine biosynthesis; putrescine biosynthesis via L-ornithine pathway; putrescine from L-ornithine: step 1/1. Inhibited by antizymes (AZs) OAZ1, OAZ2 and OAZ3 in response to polyamine levels. AZs inhibit the assembly of the functional homodimer by binding to ODC monomers. Additionally, OAZ1 targets ODC monomers for ubiquitin-independent proteolytic destruction by the 26S proteasome. Its function is as follows. Catalyzes the first and rate-limiting step of polyamine biosynthesis that converts ornithine into putrescine, which is the precursor for the polyamines, spermidine and spermine. Polyamines are essential for cell proliferation and are implicated in cellular processes, ranging from DNA replication to apoptosis. The sequence is that of Ornithine decarboxylase (Odc1) from Rattus norvegicus (Rat).